The sequence spans 839 residues: Amyloid-beta A4 precursor protein-binding family A member 1 (839 aa).

Disordered regions lie at residues Met1–Ala118, Arg235–Asp346, and Val362–Lys437. A compositionally biased stretch (acidic residues) spans Glu23–Gln38. A Phosphoserine modification is found at Ser79. Composition is skewed to basic and acidic residues over residues Asp103–Asp112 and His237–Glu255. Positions Tyr227–Pro315 are munc-18-1 binding. A phosphoserine mark is found at Ser243, Ser247, Ser249, Ser264, Ser281, and Ser286. Position 306 is a phosphothreonine (Thr306). Ser314 and Ser369 each carry phosphoserine. Thr372 is subject to Phosphothreonine. Residues Glu375–Ser438 are LIN-2/CASK binding. Residues Pro389 to Asp400 are compositionally biased toward basic and acidic residues. Low complexity predominate over residues Gly401–Ser417. Phosphoserine is present on residues Ser403, Ser405, Ser410, and Ser570. Positions Asp459–Asp645 constitute a PID domain. Residues Leu628–Tyr643 form an autoinhibitory helix linker region. PDZ domains follow at residues Asp658 to Cys744 and Thr749 to Ala824.

As to quaternary structure, part of a multimeric complex containing STXBP1 and STX1A. Interacts with STXBP1. Component of the brain-specific heterotrimeric complex (LIN-10-LIN-2-LIN-7 complex) composed of at least APBA1, CASK, and LIN7, which associates with the motor protein KIF17 to transport vesicles along microtubules. Within the complex, interacts (via PDZ domain) with the motor protein KIF17; the interaction is direct and is required for association of KIF17 with the cargo that is to be transported. Binds to the cytoplasmic domain of amyloid protein (APP). Interacts (via PDZ 1 and 2 domains) with FSPB. Isoform 2 interacts (via its truncated PID domain) with active, GTP-bound RAB6A and RAB6B. Brain. Detected in the cerebellum, hippocampus, olfactory system, piriform and entorhinal cortex, supraoptic nucleus of the hypothalamus, substantia nigra, and other mesencephalic areas.

The protein localises to the cytoplasm. It is found in the perinuclear region. The protein resides in the nucleus. Its subcellular location is the golgi apparatus. In terms of biological role, putative function in synaptic vesicle exocytosis by binding to Munc18-1, an essential component of the synaptic vesicle exocytotic machinery. May modulate processing of the amyloid-beta precursor protein (APP) and hence formation of APP-beta. This Rattus norvegicus (Rat) protein is Amyloid-beta A4 precursor protein-binding family A member 1 (Apba1).